The sequence spans 135 residues: Large ribosomal subunit protein eL32 (135 aa).

Residues 51–77 are disordered; that stretch reads GRDNKFRLKMKGKPRPPEPGYRSPRKV.

The protein belongs to the eukaryotic ribosomal protein eL32 family.

The chain is Large ribosomal subunit protein eL32 (rpl32e) from Nanoarchaeum equitans (strain Kin4-M).